The following is a 413-amino-acid chain: Histidine--tRNA ligase (413 aa).

The protein belongs to the class-II aminoacyl-tRNA synthetase family. In terms of assembly, homodimer.

It is found in the cytoplasm. It carries out the reaction tRNA(His) + L-histidine + ATP = L-histidyl-tRNA(His) + AMP + diphosphate + H(+). The protein is Histidine--tRNA ligase of Neorickettsia sennetsu (strain ATCC VR-367 / Miyayama) (Ehrlichia sennetsu).